The following is a 332-amino-acid chain: Malate dehydrogenase, cytoplasmic (332 aa).

Residues 16 to 17 (QI), aspartate 43, and glycine 90 each bind NAD(+). Arginine 99 provides a ligand contact to oxaloacetate. Positions 113 and 132 each coordinate NAD(+). Residues asparagine 132, arginine 163, histidine 188, and serine 243 each contribute to the oxaloacetate site. Histidine 188 (proton acceptor) is an active-site residue.

This sequence belongs to the LDH/MDH superfamily. MDH type 2 family. As to quaternary structure, homodimer.

It is found in the cytoplasm. The enzyme catalyses (S)-malate + NAD(+) = oxaloacetate + NADH + H(+). The protein is Malate dehydrogenase, cytoplasmic (CMDH) of Medicago sativa (Alfalfa).